Reading from the N-terminus, the 467-residue chain is METLPIFMKLRDRPCLVVGGGEIASRKVSLLEKAGASVTVVSPELHPTLAKSLAEGRIRHLASVFEPAQLDGAVLVIAATDDAEVNRAVSREAQARNIPVNVVDAPELCTFIVPSIVDRSPLLVAVSSGGTAPVLARMLRTRIETLIPATYGRLAAFAAEFREAVKQRFSTGQQRRIFWEDVFQGVIGEQVLSGQEEAARHAMQQVLSGRGELHHGEVYLVGGGPGDPDLLTFRALRLMQQADVCVYDKLVSKEVMALVRRDAELIYVGKSRDQHTLPQEDINQLLVRLAKEGKRVLRLKGGDPFIFGRGGEEIETLMENGIPFQVVPGITAANGVSSYAGIPLTHRDYAQSCLFTTGHLKDGSVNLDWDALVRPNQTVVIYMGLVGLPEICRQMVAHGAPENLPIAIVQQGTTQRQRVVEGTLATLPGLVERAGLRAPCLIIVGQVVRLREKLAWFAPSPEVVSAG.

Residues Met-1–Met-203 form a precorrin-2 dehydrogenase /sirohydrochlorin ferrochelatase region. Residues Glu-22–Ile-23 and Pro-43–Glu-44 each bind NAD(+). Residue Ser-128 is modified to Phosphoserine. Residues Gly-216–Gly-467 form a uroporphyrinogen-III C-methyltransferase region. Pro-225 is a binding site for S-adenosyl-L-methionine. Asp-248 serves as the catalytic Proton acceptor. The active-site Proton donor is the Lys-270. Residues Gly-301–Asp-303, Ile-306, Thr-331–Ala-332, Met-383, and Gly-412 each bind S-adenosyl-L-methionine.

This sequence in the N-terminal section; belongs to the precorrin-2 dehydrogenase / sirohydrochlorin ferrochelatase family. It in the C-terminal section; belongs to the precorrin methyltransferase family.

The catalysed reaction is uroporphyrinogen III + 2 S-adenosyl-L-methionine = precorrin-2 + 2 S-adenosyl-L-homocysteine + H(+). It catalyses the reaction precorrin-2 + NAD(+) = sirohydrochlorin + NADH + 2 H(+). The enzyme catalyses siroheme + 2 H(+) = sirohydrochlorin + Fe(2+). The protein operates within cofactor biosynthesis; adenosylcobalamin biosynthesis; precorrin-2 from uroporphyrinogen III: step 1/1. It participates in cofactor biosynthesis; adenosylcobalamin biosynthesis; sirohydrochlorin from precorrin-2: step 1/1. It functions in the pathway porphyrin-containing compound metabolism; siroheme biosynthesis; precorrin-2 from uroporphyrinogen III: step 1/1. Its pathway is porphyrin-containing compound metabolism; siroheme biosynthesis; siroheme from sirohydrochlorin: step 1/1. The protein operates within porphyrin-containing compound metabolism; siroheme biosynthesis; sirohydrochlorin from precorrin-2: step 1/1. Multifunctional enzyme that catalyzes the SAM-dependent methylations of uroporphyrinogen III at position C-2 and C-7 to form precorrin-2 via precorrin-1. Then it catalyzes the NAD-dependent ring dehydrogenation of precorrin-2 to yield sirohydrochlorin. Finally, it catalyzes the ferrochelation of sirohydrochlorin to yield siroheme. The protein is Siroheme synthase of Methylobacillus flagellatus (strain ATCC 51484 / DSM 6875 / VKM B-1610 / KT).